The following is a 604-amino-acid chain: Acetylcholinesterase 4 (604 aa).

The signal sequence occupies residues 1-23; it reads MKPKLVFLPFLIFITVFIEESEA. A disulfide bond links C88 and C115. 2 N-linked (GlcNAc...) asparagine glycosylation sites follow: N96 and N128. The active-site Acyl-ester intermediate is S219. An intrachain disulfide couples C273 to C284. 2 N-linked (GlcNAc...) asparagine glycosylation sites follow: N274 and N299. E347 (charge relay system) is an active-site residue. 2 N-linked (GlcNAc...) asparagine glycosylation sites follow: N400 and N446. A disulfide bridge links C426 with C561. H477 serves as the catalytic Charge relay system.

The protein belongs to the type-B carboxylesterase/lipase family.

The protein localises to the synapse. It is found in the secreted. The protein resides in the cell membrane. The enzyme catalyses acetylcholine + H2O = choline + acetate + H(+). Its function is as follows. Rapidly hydrolyzes choline released into the synapse. The protein is Acetylcholinesterase 4 (ace-4) of Caenorhabditis briggsae.